A 1060-amino-acid chain; its full sequence is Carbamoyl phosphate synthase large chain (1060 aa).

The carboxyphosphate synthetic domain stretch occupies residues methionine 1–glutamate 401. ATP-binding residues include arginine 129, arginine 169, glycine 175, glycine 176, arginine 208, isoleucine 210, glutamate 215, glycine 241, isoleucine 242, histidine 243, glutamine 284, and glutamate 298. Positions lysine 133–valine 327 constitute an ATP-grasp 1 domain. Glutamine 284, glutamate 298, and asparagine 300 together coordinate Mg(2+). Glutamine 284, glutamate 298, and asparagine 300 together coordinate Mn(2+). Positions isoleucine 402–serine 546 are oligomerization domain. The tract at residues leucine 547–tyrosine 929 is carbamoyl phosphate synthetic domain. In terms of domain architecture, ATP-grasp 2 spans glutamate 671–leucine 861. ATP-binding residues include arginine 707, alanine 746, leucine 748, glutamate 752, glycine 777, valine 778, histidine 779, serine 780, glutamine 820, and glutamate 832. Mg(2+) is bound by residues glutamine 820, glutamate 832, and asparagine 834. Residues glutamine 820, glutamate 832, and asparagine 834 each coordinate Mn(2+). The MGS-like domain occupies leucine 930–aspartate 1060. Residues leucine 930 to aspartate 1060 form an allosteric domain region.

This sequence belongs to the CarB family. Composed of two chains; the small (or glutamine) chain promotes the hydrolysis of glutamine to ammonia, which is used by the large (or ammonia) chain to synthesize carbamoyl phosphate. Tetramer of heterodimers (alpha,beta)4. Requires Mg(2+) as cofactor. Mn(2+) serves as cofactor.

The catalysed reaction is hydrogencarbonate + L-glutamine + 2 ATP + H2O = carbamoyl phosphate + L-glutamate + 2 ADP + phosphate + 2 H(+). It carries out the reaction hydrogencarbonate + NH4(+) + 2 ATP = carbamoyl phosphate + 2 ADP + phosphate + 2 H(+). It functions in the pathway amino-acid biosynthesis; L-arginine biosynthesis; carbamoyl phosphate from bicarbonate: step 1/1. Its pathway is pyrimidine metabolism; UMP biosynthesis via de novo pathway; (S)-dihydroorotate from bicarbonate: step 1/3. In terms of biological role, large subunit of the glutamine-dependent carbamoyl phosphate synthetase (CPSase). CPSase catalyzes the formation of carbamoyl phosphate from the ammonia moiety of glutamine, carbonate, and phosphate donated by ATP, constituting the first step of 2 biosynthetic pathways, one leading to arginine and/or urea and the other to pyrimidine nucleotides. The large subunit (synthetase) binds the substrates ammonia (free or transferred from glutamine from the small subunit), hydrogencarbonate and ATP and carries out an ATP-coupled ligase reaction, activating hydrogencarbonate by forming carboxy phosphate which reacts with ammonia to form carbamoyl phosphate. This is Carbamoyl phosphate synthase large chain from Streptococcus agalactiae serotype V (strain ATCC BAA-611 / 2603 V/R).